A 219-amino-acid chain; its full sequence is Inner membrane protein YccA (219 aa).

Residues 1 to 22 are Periplasmic-facing; it reads MDRIVSSSHDRTSLLSTHKVLR. Helical transmembrane passes span 23–43 and 44–64; these read NTYF…TAST and VLML…GLMF. At 65-73 the chain is on the periplasmic side; sequence LTYKTANKP. A helical membrane pass occupies residues 74 to 94; that stretch reads TGIISAFAFTGFLGYILGPIL. The Cytoplasmic portion of the chain corresponds to 95–104; it reads NTYLSAGMGD. The helical transmembrane segment at 105–125 threads the bilayer; it reads VIAMALGGTALVFFCCSAYVL. Residues 126 to 133 lie on the Periplasmic side of the membrane; it reads TTRKDMSF. The helical transmembrane segment at 134-154 threads the bilayer; that stretch reads LGGMLMAGIVVVLIGMVANIF. The Cytoplasmic portion of the chain corresponds to 155 to 157; the sequence is LQL. A helical transmembrane segment spans residues 158–178; the sequence is PALHLAISAVFILISSGAILF. Over 179–195 the chain is Periplasmic; the sequence is ETSNIIHGGETNYIRAT. Residues 196–216 form a helical membrane-spanning segment; it reads VSLYVSLYNIFVSLLSILGFA. Over 217–219 the chain is Cytoplasmic; sequence SRD.

This sequence belongs to the BI1 family.

It localises to the cell inner membrane. This chain is Inner membrane protein YccA (yccA), found in Escherichia coli O6:H1 (strain CFT073 / ATCC 700928 / UPEC).